Here is a 639-residue protein sequence, read N- to C-terminus: PTS-dependent dihydroxyacetone kinase operon regulatory protein (639 aa).

The interval 1–318 (MSGAFNNDGR…MRQLMTSQLG (318 aa)) is sensor domain. The GAF domain maps to 52–189 (AMLTLGQAAL…AIAREVGNLL (138 aa)). One can recognise a PAS domain in the interval 203–265 (NQLNALLESM…AVLQQAIKQA (63 aa)). The 226-residue stretch at 327–552 (MPQDDPQTRR…LYSVIENLAL (226 aa)) folds into the Sigma-54 factor interaction domain. Residues 355–362 (GEEGVGKA) and 415–424 (AHGGTLFLEK) each bind ATP.

As to quaternary structure, homodimer. DhaR forms complexes with DhaK and DhaL-ADP.

Positively regulates the dhaKLM operon from a sigma-70 promoter. Represses its own expression. This chain is PTS-dependent dihydroxyacetone kinase operon regulatory protein, found in Escherichia coli (strain K12).